Here is a 345-residue protein sequence, read N- to C-terminus: Dihydroorotate dehydrogenase (quinone) (345 aa).

FMN-binding positions include Ala65–Lys69 and Thr89. Lys69 lines the substrate pocket. Asn114 to Phe118 provides a ligand contact to substrate. Positions 142 and 175 each coordinate FMN. Asn175 provides a ligand contact to substrate. Ser178 functions as the Nucleophile in the catalytic mechanism. Residue Asn180 participates in substrate binding. 2 residues coordinate FMN: Lys220 and Thr248. Asn249 to Thr250 provides a ligand contact to substrate. FMN contacts are provided by residues Gly271, Gly300, and Tyr321–Thr322.

Belongs to the dihydroorotate dehydrogenase family. Type 2 subfamily. Monomer. FMN serves as cofactor.

The protein resides in the cell membrane. The catalysed reaction is (S)-dihydroorotate + a quinone = orotate + a quinol. It functions in the pathway pyrimidine metabolism; UMP biosynthesis via de novo pathway; orotate from (S)-dihydroorotate (quinone route): step 1/1. In terms of biological role, catalyzes the conversion of dihydroorotate to orotate with quinone as electron acceptor. The chain is Dihydroorotate dehydrogenase (quinone) from Burkholderia multivorans (strain ATCC 17616 / 249).